Consider the following 223-residue polypeptide: Sugar fermentation stimulation protein homolog (223 aa).

The protein belongs to the SfsA family.

This is Sugar fermentation stimulation protein homolog from Thermosipho melanesiensis (strain DSM 12029 / CIP 104789 / BI429).